The primary structure comprises 648 residues: Probable LRR receptor-like serine/threonine-protein kinase At4g30520 (648 aa).

Residues 1-30 (MVVVTKKTMKIQIHLLYSFLFLCFSTLTLS) form the signal peptide. At 31 to 238 (SEPRNPEVEA…SSSGRRSNRL (208 aa)) the chain is on the extracellular side. 2 N-linked (GlcNAc...) asparagine glycosylation sites follow: N99 and N112. 4 LRR repeats span residues 100–125 (LTNLRQVSLQNNNISGKIPPELGFLP), 127–148 (LQTLDLSNNRFSGDIPVSIDQL), 149–172 (SSLQYLRLNNNSLSGPFPASLSQI), and 174–199 (HLSFLDLSYNNLSGPVPKFPARTFNV). N158 and N184 each carry an N-linked (GlcNAc...) asparagine glycan. Residues 239–259 (AIALSVSLGSVVILVLALGSF) traverse the membrane as a helical segment. Over 260–648 (CWYRKKQRRL…SFAMELSGPR (389 aa)) the chain is Cytoplasmic. T300 is modified (phosphothreonine). Positions 303-582 (FSSKNILGAG…EGDGLAERWA (280 aa)) constitute a Protein kinase domain. Residue 309 to 317 (LGAGGFGNV) coordinates ATP. T326 bears the Phosphothreonine mark. K331 is a binding site for ATP. Phosphoserine is present on residues S384 and S387. D426 functions as the Proton acceptor in the catalytic mechanism. 3 positions are modified to phosphothreonine: T459, T460, and T465. Residue Y473 is modified to Phosphotyrosine. The residue at position 475 (S475) is a Phosphoserine. T476 is subject to Phosphothreonine. Phosphoserine is present on S480. T555 carries the phosphothreonine modification.

Belongs to the protein kinase superfamily. Ser/Thr protein kinase family.

The protein resides in the cell membrane. The catalysed reaction is L-seryl-[protein] + ATP = O-phospho-L-seryl-[protein] + ADP + H(+). It carries out the reaction L-threonyl-[protein] + ATP = O-phospho-L-threonyl-[protein] + ADP + H(+). This Arabidopsis thaliana (Mouse-ear cress) protein is Probable LRR receptor-like serine/threonine-protein kinase At4g30520.